Reading from the N-terminus, the 269-residue chain is Putative carbamate hydrolase RutD (269 aa).

Positions Val-26 to Asn-144 constitute an AB hydrolase-1 domain.

It belongs to the AB hydrolase superfamily. Hydrolase RutD family.

The enzyme catalyses carbamate + 2 H(+) = NH4(+) + CO2. Functionally, involved in pyrimidine catabolism. May facilitate the hydrolysis of carbamate, a reaction that can also occur spontaneously. This Caulobacter vibrioides (strain ATCC 19089 / CIP 103742 / CB 15) (Caulobacter crescentus) protein is Putative carbamate hydrolase RutD.